A 240-amino-acid polypeptide reads, in one-letter code: uncharacterized protein (240 aa).

The ABC transporter domain maps to 2–223 (VRIQDLSLAF…GNAPRELHQA (222 aa)). 34 to 41 (GSSGVGKS) lines the ATP pocket.

It belongs to the ABC transporter superfamily.

This is an uncharacterized protein from Haemophilus influenzae (strain ATCC 51907 / DSM 11121 / KW20 / Rd).